The sequence spans 65 residues: Large ribosomal subunit protein bL35 (65 aa).

Belongs to the bacterial ribosomal protein bL35 family.

The sequence is that of Large ribosomal subunit protein bL35 from Caldicellulosiruptor bescii (strain ATCC BAA-1888 / DSM 6725 / KCTC 15123 / Z-1320) (Anaerocellum thermophilum).